A 190-amino-acid polypeptide reads, in one-letter code: Recombination protein RecR (190 aa).

The C4-type zinc-finger motif lies at 58 to 73 (CGQCGALSENELCEIC). The 87-residue stretch at 81–167 (NILCIVESPK…TFSKIAQGIP (87 aa)) folds into the Toprim domain.

Belongs to the RecR family.

Functionally, may play a role in DNA repair. It seems to be involved in an RecBC-independent recombinational process of DNA repair. It may act with RecF and RecO. This chain is Recombination protein RecR, found in Campylobacter jejuni subsp. jejuni serotype O:6 (strain 81116 / NCTC 11828).